We begin with the raw amino-acid sequence, 232 residues long: BTB/POZ domain-containing protein KCTD11 (232 aa).

The region spanning 1–49 (MLGAMFRAGTPMTPNLNPEGGGHYFIDRDGKAFRHILNFLRLGRLDLPL) is the BTB domain.

Homopentamer. Interacts with KCTD6 and KCTD21; KCTD11 and KCTD6 or KCTD21 may associate in pentameric assemblies. Component of the BCR(KCTD11) E3 ubiquitin ligase complex, at least composed of CUL3 and KCTD11 and RBX1. Interacts (via BTB domain) with CUL3; initially a 4:4 stoichiometry has been reported, however, electron microscopy revealed pentameric states of the BTB domain.

It participates in protein modification; protein ubiquitination. Plays a role as a marker and a regulator of neuronal differentiation; Up-regulated by a variety of neurogenic signals, such as retinoic acid, epidermal growth factor/EGF and NGFB/nerve growth factor. Induces apoptosis, growth arrest and the expression of cyclin-dependent kinase inhibitor CDKN1B. Plays a role as a tumor repressor and inhibits cell growth and tumorigenicity of medulloblastoma (MDB). Acts as a probable substrate-specific adapter for a BCR (BTB-CUL3-RBX1) E3 ubiquitin-protein ligase complex towards HDAC1. Functions as antagonist of the Hedgehog pathway on cell proliferation and differentiation by affecting the nuclear transfer of transcription factor GLI1, thus maintaining cerebellar granule cells in undifferentiated state, this effect probably occurs via HDAC1 down-regulation, keeping GLI1 acetylated and inactive. The sequence is that of BTB/POZ domain-containing protein KCTD11 (KCTD11) from Bos taurus (Bovine).